The chain runs to 1327 residues: P-glycoprotein 14 (1327 aa).

Basic and acidic residues predominate over residues 1–17 (MAPKDDPDNRGFDDQRR). Positions 1–23 (MAPKDDPDNRGFDDQRRPSQRST) are disordered. Topologically, residues 1–104 (MAPKDDPDNR…RYGKKFDYLL (104 aa)) are cytoplasmic. Residues 105–125 (LFIGTICAIISGVSQPILALV) form a helical membrane-spanning segment. One can recognise an ABC transmembrane type-1 1 domain in the interval 106-394 (FIGTICAIIS…ISPHMMVLLN (289 aa)). The Extracellular segment spans residues 126–151 (SGRVTNALLVYPPTSKQFRNKANENV). Residues 152–172 (YIFLGIGIFISITNFIQYMCF) traverse the membrane as a helical segment. The Cytoplasmic portion of the chain corresponds to 173–225 (QHCCTRVMAQMRHRFVYSVLRQNAGWFDKNHSGTITTKLNDSMERIREGIGDK). A helical membrane pass occupies residues 226 to 246 (LGVLLRGFAMLIAAIVVAYIY). A topological domain (extracellular) is located at residue glutamate 247. Residues 248–268 (WRLASMMLGVAPTCCICMSLL) form a helical membrane-spanning segment. Over 269-331 (ARQMTSTTIK…KFAVWKGFWS (63 aa)) the chain is Cytoplasmic. The helical transmembrane segment at 332–352 (GFFGGLFFFWLFSFLGCGMLY) threads the bilayer. Over 353-364 (GAYLLKVGIITT) the chain is Extracellular. The helical transmembrane segment at 365-385 (PGDVFIVVMSMLLGAYFLGLI) threads the bilayer. Residues 386–766 (SPHMMVLLNA…NAKGNYLYMF (381 aa)) are Cytoplasmic-facing. Positions 429-665 (VKFENVHFRY…GGRYFDLVKA (237 aa)) constitute an ABC transporter 1 domain. 464-471 (GHSGCGKS) is a binding site for ATP. The interval 671–721 (DPEATEEFEEEEIDLDDTSRSSRRSSMTSARSGSEAFRRGNSLNDSFSGSK) is disordered. Positions 673-686 (EATEEFEEEEIDLD) are enriched in acidic residues. A compositionally biased stretch (low complexity) spans 694 to 704 (RSSMTSARSGS). The span at 711-721 (NSLNDSFSGSK) shows a compositional bias: polar residues. The ABC transmembrane type-1 2 domain occupies 766-1053 (FLGTVFALIR…SAQYFPEFVK (288 aa)). Residues 767–789 (LGTVFALIRGLELPALALIFGWV) traverse the membrane as a helical segment. Residues 790-805 (FEGFTFVPYGGRMMHR) are Extracellular-facing. The helical transmembrane segment at 806–826 (MAMAVIAFASVGVGVWFSQLA) threads the bilayer. Residues 827 to 886 (SSVLFAVVSENLSMRFRVQSFRNLLYQDASYFDNPAHAPGKLITRLASDAPNIKAVVDAR) are Cytoplasmic-facing. Residues 887–907 (MLQVIYALAAIIANIAIAFIY) traverse the membrane as a helical segment. The Extracellular portion of the chain corresponds to 908 to 910 (CWQ). Residues 911 to 931 (IGILGTSLILLLAFVMIGLAY) traverse the membrane as a helical segment. The Cytoplasmic portion of the chain corresponds to 932-996 (KISLMNVEQI…KGMIEAINYS (65 aa)). Residues 997 to 1017 (LTQSFMYFMMCFTYAVGIRII) form a helical membrane-spanning segment. Residues 1018–1030 (YQGDKSSDDTFKG) lie on the Extracellular side of the membrane. The chain crosses the membrane as a helical span at residues 1031–1051 (IIAMMLGAVAVMNSAQYFPEF). Topologically, residues 1052–1327 (VKAKTAAGML…KLIKKQDLAV (276 aa)) are cytoplasmic. One can recognise an ABC transporter 2 domain in the interval 1086-1322 (ILFENVKFSY…KGRYYKLIKK (237 aa)). 1121–1128 (GPSGSGKS) lines the ATP pocket.

Belongs to the ABC transporter superfamily. ABCB family. Multidrug resistance exporter (TC 3.A.1.201) subfamily. Expressed in pharyngeal epithelial cells that surround the anterior pharyngeal cuticle. Shares same expression pattern as sms-5.

The protein resides in the apical cell membrane. Contributes to the establishment of a polar lipid barrier to block small molecule passage into the pharyngeal cuticle. Probably exports polar lipids into the developing pharyngeal cuticle to protect against xenobiotic insult. Likely functions in the same pathway as sphingomyelin synthase sms-5. The sequence is that of P-glycoprotein 14 from Caenorhabditis elegans.